The chain runs to 143 residues: Sarcoplasmic/endoplasmic reticulum calcium ATPase (143 aa).

This sequence belongs to the cation transport ATPase (P-type) (TC 3.A.3) family. Type IIA subfamily.

Its subcellular location is the endoplasmic reticulum membrane. The protein localises to the sarcoplasmic reticulum membrane. The catalysed reaction is Ca(2+)(in) + ATP + H2O = Ca(2+)(out) + ADP + phosphate + H(+). Functionally, this magnesium-dependent enzyme catalyzes the hydrolysis of ATP coupled with the transport of calcium. Transports calcium ions from the cytosol into the sarcoplasmic/endoplasmic reticulum lumen. Contributes to calcium sequestration involved in muscular excitation/contraction. The sequence is that of Sarcoplasmic/endoplasmic reticulum calcium ATPase from Chionoecetes opilio (Atlantic snow crab).